The following is a 183-amino-acid chain: Peptide deformylase (183 aa).

Fe cation is bound by residues C110 and H153. Residue E154 is part of the active site. H157 is a Fe cation binding site.

It belongs to the polypeptide deformylase family. It depends on Fe(2+) as a cofactor.

The catalysed reaction is N-terminal N-formyl-L-methionyl-[peptide] + H2O = N-terminal L-methionyl-[peptide] + formate. Removes the formyl group from the N-terminal Met of newly synthesized proteins. Requires at least a dipeptide for an efficient rate of reaction. N-terminal L-methionine is a prerequisite for activity but the enzyme has broad specificity at other positions. This is Peptide deformylase from Listeria monocytogenes serotype 4a (strain HCC23).